A 160-amino-acid chain; its full sequence is Large ribosomal subunit protein uL22c (160 aa).

This sequence belongs to the universal ribosomal protein uL22 family. Part of the 50S ribosomal subunit.

Its subcellular location is the plastid. The protein resides in the chloroplast. In terms of biological role, this protein binds specifically to 23S rRNA. Its function is as follows. The globular domain of the protein is located near the polypeptide exit tunnel on the outside of the subunit, while an extended beta-hairpin is found that lines the wall of the exit tunnel in the center of the 70S ribosome. The sequence is that of Large ribosomal subunit protein uL22c (rpl22) from Aethionema cordifolium (Lebanon stonecress).